Consider the following 231-residue polypeptide: 5'-methylthioadenosine/S-adenosylhomocysteine nucleosidase (231 aa).

E12 (proton acceptor) is an active-site residue. Substrate is bound by residues G78, I153, and 174–175 (ME). The active-site Proton donor is the D198.

It belongs to the PNP/UDP phosphorylase family. MtnN subfamily.

It carries out the reaction S-adenosyl-L-homocysteine + H2O = S-(5-deoxy-D-ribos-5-yl)-L-homocysteine + adenine. It catalyses the reaction S-methyl-5'-thioadenosine + H2O = 5-(methylsulfanyl)-D-ribose + adenine. The catalysed reaction is 5'-deoxyadenosine + H2O = 5-deoxy-D-ribose + adenine. The protein operates within amino-acid biosynthesis; L-methionine biosynthesis via salvage pathway; S-methyl-5-thio-alpha-D-ribose 1-phosphate from S-methyl-5'-thioadenosine (hydrolase route): step 1/2. Functionally, catalyzes the irreversible cleavage of the glycosidic bond in both 5'-methylthioadenosine (MTA) and S-adenosylhomocysteine (SAH/AdoHcy) to adenine and the corresponding thioribose, 5'-methylthioribose and S-ribosylhomocysteine, respectively. Also cleaves 5'-deoxyadenosine, a toxic by-product of radical S-adenosylmethionine (SAM) enzymes, into 5-deoxyribose and adenine. In Shewanella putrefaciens (strain CN-32 / ATCC BAA-453), this protein is 5'-methylthioadenosine/S-adenosylhomocysteine nucleosidase.